Consider the following 61-residue polypeptide: Small ribosomal subunit protein uS14B (61 aa).

4 residues coordinate Zn(2+): C24, C27, C40, and C43.

Belongs to the universal ribosomal protein uS14 family. Zinc-binding uS14 subfamily. As to quaternary structure, part of the 30S ribosomal subunit. Contacts proteins S3 and S10. Requires Zn(2+) as cofactor.

Its function is as follows. Binds 16S rRNA, required for the assembly of 30S particles and may also be responsible for determining the conformation of the 16S rRNA at the A site. This Salinispora arenicola (strain CNS-205) protein is Small ribosomal subunit protein uS14B.